The primary structure comprises 236 residues: Small ribosomal subunit protein uS3 (236 aa).

Residues isoleucine 39–lysine 107 form the KH type-2 domain. Positions glutamine 213–glycine 229 are enriched in basic and acidic residues. Positions glutamine 213–glutamine 236 are disordered.

Belongs to the universal ribosomal protein uS3 family. In terms of assembly, part of the 30S ribosomal subunit. Forms a tight complex with proteins S10 and S14.

In terms of biological role, binds the lower part of the 30S subunit head. Binds mRNA in the 70S ribosome, positioning it for translation. This is Small ribosomal subunit protein uS3 from Wolinella succinogenes (strain ATCC 29543 / DSM 1740 / CCUG 13145 / JCM 31913 / LMG 7466 / NCTC 11488 / FDC 602W) (Vibrio succinogenes).